We begin with the raw amino-acid sequence, 123 residues long: Small ribosomal subunit protein uS13 (123 aa).

The segment at 96–123 is disordered; it reads GLPVRGQRTKTNARTRKGPKKTVAGKKK.

The protein belongs to the universal ribosomal protein uS13 family. As to quaternary structure, part of the 30S ribosomal subunit. Forms a loose heterodimer with protein S19. Forms two bridges to the 50S subunit in the 70S ribosome.

Located at the top of the head of the 30S subunit, it contacts several helices of the 16S rRNA. In the 70S ribosome it contacts the 23S rRNA (bridge B1a) and protein L5 of the 50S subunit (bridge B1b), connecting the 2 subunits; these bridges are implicated in subunit movement. Contacts the tRNAs in the A and P-sites. The protein is Small ribosomal subunit protein uS13 of Nocardia farcinica (strain IFM 10152).